The chain runs to 378 residues: Glutamate 5-kinase 1 (378 aa).

Lysine 13 contacts ATP. Positions 53, 140, and 152 each coordinate substrate. 172-173 (SD) is an ATP binding site. One can recognise a PUA domain in the interval 278-355 (AGRLTVDAGA…AEIETVLGYE (78 aa)).

Belongs to the glutamate 5-kinase family.

The protein resides in the cytoplasm. It catalyses the reaction L-glutamate + ATP = L-glutamyl 5-phosphate + ADP. The protein operates within amino-acid biosynthesis; L-proline biosynthesis; L-glutamate 5-semialdehyde from L-glutamate: step 1/2. Its function is as follows. Catalyzes the transfer of a phosphate group to glutamate to form L-glutamate 5-phosphate. The chain is Glutamate 5-kinase 1 from Mesorhizobium japonicum (strain LMG 29417 / CECT 9101 / MAFF 303099) (Mesorhizobium loti (strain MAFF 303099)).